We begin with the raw amino-acid sequence, 85 residues long: Large ribosomal subunit protein bL31B (85 aa).

This sequence belongs to the bacterial ribosomal protein bL31 family. Type B subfamily. As to quaternary structure, part of the 50S ribosomal subunit.

This chain is Large ribosomal subunit protein bL31B, found in Stutzerimonas stutzeri (strain A1501) (Pseudomonas stutzeri).